A 619-amino-acid polypeptide reads, in one-letter code: Zinc finger CCCH domain-containing protein 67 (619 aa).

ANK repeat units follow at residues Glu-52–Pro-81 and Ser-88–Leu-120. 2 C3H1-type zinc fingers span residues His-213–Phe-241 and Gln-249–Asp-273. The segment at Ser-308 to Gln-341 is disordered. The span at Ala-322–Ala-337 shows a compositional bias: gly residues.

The chain is Zinc finger CCCH domain-containing protein 67 from Oryza sativa subsp. japonica (Rice).